The chain runs to 212 residues: Ribonuclease HII (212 aa).

Residues Cys-19–Ser-212 enclose the RNase H type-2 domain. Asp-25, Glu-26, and Asp-120 together coordinate a divalent metal cation.

The protein belongs to the RNase HII family. Mn(2+) serves as cofactor. It depends on Mg(2+) as a cofactor.

Its subcellular location is the cytoplasm. The catalysed reaction is Endonucleolytic cleavage to 5'-phosphomonoester.. Its function is as follows. Endonuclease that specifically degrades the RNA of RNA-DNA hybrids. This Ehrlichia ruminantium (strain Welgevonden) protein is Ribonuclease HII.